A 272-amino-acid polypeptide reads, in one-letter code: 2-dehydro-3-deoxyphosphooctonate aldolase (272 aa).

The protein belongs to the KdsA family.

Its subcellular location is the cytoplasm. The catalysed reaction is D-arabinose 5-phosphate + phosphoenolpyruvate + H2O = 3-deoxy-alpha-D-manno-2-octulosonate-8-phosphate + phosphate. It functions in the pathway carbohydrate biosynthesis; 3-deoxy-D-manno-octulosonate biosynthesis; 3-deoxy-D-manno-octulosonate from D-ribulose 5-phosphate: step 2/3. The protein operates within bacterial outer membrane biogenesis; lipopolysaccharide biosynthesis. This chain is 2-dehydro-3-deoxyphosphooctonate aldolase, found in Pelobacter propionicus (strain DSM 2379 / NBRC 103807 / OttBd1).